Reading from the N-terminus, the 866-residue chain is DNA topoisomerase 3-beta (866 aa).

The Toprim domain occupies 4-149 (TVLMVAEKPS…RIFRAKFSSV (146 aa)). Glu-10, Asp-114, and Asp-116 together coordinate Mg(2+). The region spanning 165–585 (SKDEALAVDA…HVLQQFMKKY (421 aa)) is the Topo IA-type catalytic domain. The segment at 207 to 212 (SYGPCQ) is interaction with DNA. Tyr-329 functions as the O-(5'-phospho-DNA)-tyrosine intermediate in the catalytic mechanism. Over residues 830 to 853 (MRRGRGRGRGRGRGRGSSRGRRGS) the composition is skewed to basic residues. A disordered region spans residues 830–866 (MRRGRGRGRGRGRGRGSSRGRRGSSRHDDPKMSFRDF). Over residues 854-866 (SRHDDPKMSFRDF) the composition is skewed to basic and acidic residues.

It belongs to the type IA topoisomerase family. Mg(2+) is required as a cofactor.

It catalyses the reaction ATP-independent breakage of single-stranded DNA, followed by passage and rejoining.. Releases the supercoiling and torsional tension of DNA introduced during the DNA replication and transcription by transiently cleaving and rejoining one strand of the DNA duplex. Introduces a single-strand break via transesterification at a target site in duplex DNA. The scissile phosphodiester is attacked by the catalytic tyrosine of the enzyme, resulting in the formation of a DNA-(5'-phosphotyrosyl)-enzyme intermediate and the expulsion of a 3'-OH DNA strand. The free DNA strand than undergoes passage around the unbroken strand thus removing DNA supercoils. Finally, in the religation step, the DNA 3'-OH attacks the covalent intermediate to expel the active-site tyrosine and restore the DNA phosphodiester backbone. This is DNA topoisomerase 3-beta (TOP3B) from Oryza sativa subsp. japonica (Rice).